The primary structure comprises 315 residues: Acetaldehyde dehydrogenase (315 aa).

An NAD(+)-binding site is contributed by 13–16 (SGNI). Cysteine 131 functions as the Acyl-thioester intermediate in the catalytic mechanism. NAD(+)-binding positions include 163 to 171 (SAGPGTRAN) and asparagine 290.

This sequence belongs to the acetaldehyde dehydrogenase family.

The catalysed reaction is acetaldehyde + NAD(+) + CoA = acetyl-CoA + NADH + H(+). In Xanthobacter autotrophicus (strain ATCC BAA-1158 / Py2), this protein is Acetaldehyde dehydrogenase.